The primary structure comprises 470 residues: 3-isopropylmalate dehydratase large subunit (470 aa).

[4Fe-4S] cluster is bound by residues Cys-349, Cys-409, and Cys-412.

This sequence belongs to the aconitase/IPM isomerase family. LeuC type 1 subfamily. In terms of assembly, heterodimer of LeuC and LeuD. The cofactor is [4Fe-4S] cluster.

It carries out the reaction (2R,3S)-3-isopropylmalate = (2S)-2-isopropylmalate. It functions in the pathway amino-acid biosynthesis; L-leucine biosynthesis; L-leucine from 3-methyl-2-oxobutanoate: step 2/4. Functionally, catalyzes the isomerization between 2-isopropylmalate and 3-isopropylmalate, via the formation of 2-isopropylmaleate. In Methylobacterium radiotolerans (strain ATCC 27329 / DSM 1819 / JCM 2831 / NBRC 15690 / NCIMB 10815 / 0-1), this protein is 3-isopropylmalate dehydratase large subunit.